The primary structure comprises 156 residues: Large ribosomal subunit protein bL17 (156 aa).

The tract at residues 127-156 is disordered; it reads RATRAAASKKAAEEKAAEAAEEKDEAAEEK. Basic and acidic residues predominate over residues 136–146; that stretch reads KAAEEKAAEAA. Acidic residues predominate over residues 147–156; the sequence is EEKDEAAEEK.

The protein belongs to the bacterial ribosomal protein bL17 family. As to quaternary structure, part of the 50S ribosomal subunit. Contacts protein L32.

The sequence is that of Large ribosomal subunit protein bL17 from Corynebacterium urealyticum (strain ATCC 43042 / DSM 7109).